A 160-amino-acid chain; its full sequence is D-aminoacyl-tRNA deacylase (160 aa).

Residues 137 to 138 carry the Gly-cisPro motif, important for rejection of L-amino acids motif; the sequence is GP.

This sequence belongs to the DTD family. In terms of assembly, homodimer.

The protein localises to the cytoplasm. It carries out the reaction glycyl-tRNA(Ala) + H2O = tRNA(Ala) + glycine + H(+). The enzyme catalyses a D-aminoacyl-tRNA + H2O = a tRNA + a D-alpha-amino acid + H(+). Its function is as follows. An aminoacyl-tRNA editing enzyme that deacylates mischarged D-aminoacyl-tRNAs. Also deacylates mischarged glycyl-tRNA(Ala), protecting cells against glycine mischarging by AlaRS. Acts via tRNA-based rather than protein-based catalysis; rejects L-amino acids rather than detecting D-amino acids in the active site. By recycling D-aminoacyl-tRNA to D-amino acids and free tRNA molecules, this enzyme counteracts the toxicity associated with the formation of D-aminoacyl-tRNA entities in vivo and helps enforce protein L-homochirality. This is D-aminoacyl-tRNA deacylase from Chloroflexus aurantiacus (strain ATCC 29364 / DSM 637 / Y-400-fl).